The sequence spans 82 residues: Small ribosomal subunit protein bS16 (82 aa).

This sequence belongs to the bacterial ribosomal protein bS16 family.

The polypeptide is Small ribosomal subunit protein bS16 (Photorhabdus laumondii subsp. laumondii (strain DSM 15139 / CIP 105565 / TT01) (Photorhabdus luminescens subsp. laumondii)).